The sequence spans 775 residues: K(+)-insensitive pyrophosphate-energized proton pump (775 aa).

Helical transmembrane passes span 9-29, 65-85, 108-128, 160-180, and 185-205; these read SLAV…AFFI, ISIL…IIPP, AVAF…GMNV, MLTV…FGIA, and LLGF…GGGI. K208 contacts substrate. 3 residues coordinate Mg(2+): D211, D215, and D241. The next 6 membrane-spanning stretches (helical) occupy residues 259–279, 288–308, 327–347, 359–379, 413–433, and 442–462; these read VTLV…VGTI, FIIF…IGNL, FYIA…VFMV, FFAT…TEYF, SVWA…IYAG, and AILY…GNTI. Mg(2+) is bound at residue D472. 4 helical membrane passes run 508 to 528, 555 to 575, 622 to 642, and 644 to 664; these read IAIG…FTDV, PVFI…ALTI, LISL…TLGV, and ALGG…VFQA. 3 residues coordinate Ca(2+): D671, D697, and D701. K704 lines the substrate pocket. Transmembrane regions (helical) follow at residues 710 to 730 and 735 to 755; these read ALNP…PIVV and GSPG…WAIW.

The protein belongs to the H(+)-translocating pyrophosphatase (TC 3.A.10) family. K(+)-insensitive subfamily. Homodimer. Mg(2+) is required as a cofactor.

The protein resides in the cell membrane. It catalyses the reaction diphosphate + H2O + H(+)(in) = 2 phosphate + 2 H(+)(out). Functionally, proton pump that utilizes the energy of pyrophosphate hydrolysis as the driving force for proton movement across the membrane. Generates a proton motive force. The chain is K(+)-insensitive pyrophosphate-energized proton pump from Chloroflexus aurantiacus (strain ATCC 29366 / DSM 635 / J-10-fl).